Reading from the N-terminus, the 218-residue chain is N-(5'-phosphoribosyl)anthranilate isomerase (218 aa).

It belongs to the TrpF family.

It catalyses the reaction N-(5-phospho-beta-D-ribosyl)anthranilate = 1-(2-carboxyphenylamino)-1-deoxy-D-ribulose 5-phosphate. It participates in amino-acid biosynthesis; L-tryptophan biosynthesis; L-tryptophan from chorismate: step 3/5. The sequence is that of N-(5'-phosphoribosyl)anthranilate isomerase from Acetivibrio thermocellus (strain ATCC 27405 / DSM 1237 / JCM 9322 / NBRC 103400 / NCIMB 10682 / NRRL B-4536 / VPI 7372) (Clostridium thermocellum).